Consider the following 428-residue polypeptide: C4-dicarboxylate transport protein (428 aa).

A run of 9 helical transmembrane segments spans residues 4-24, 44-64, 76-96, 142-162, 184-204, 222-242, 289-309, 326-346, and 352-372; these read SLFK…ILLG, LIKM…IAGM, VALL…LIIV, IGAF…LFGF, VIFG…FGAM, LIIC…GTIA, VVGL…SIYL, IFHQ…AAGV, and IVLA…LALI.

This sequence belongs to the dicarboxylate/amino acid:cation symporter (DAACS) (TC 2.A.23) family.

It localises to the cell inner membrane. Responsible for the transport of dicarboxylates such as succinate, fumarate, and malate from the periplasm across the membrane. The protein is C4-dicarboxylate transport protein of Salmonella arizonae (strain ATCC BAA-731 / CDC346-86 / RSK2980).